Consider the following 310-residue polypeptide: Transcription initiation factor TFIID subunit 8 (310 aa).

Positions M1 to H30 are disordered. At A2 the chain carries N-acetylalanine. Residues R35–F102 enclose the Histone-fold; involved in forming hexamer structure in TFIID complex domain. Residue T130 is modified to Phosphothreonine. The interval D262–S310 is disordered. Residues T270–R283 show a composition bias toward polar residues. At S271 the chain carries Phosphoserine. Residues Y294–K307 carry the Nuclear localization signal motif. Over residues P297–S310 the composition is skewed to basic residues.

The protein belongs to the TAF8 family. In terms of assembly, component of the TFIID basal transcription factor complex, composed of TATA-box-binding protein TBP, and a number of TBP-associated factors (TAFs), including TAF1, TAF2, TAF3, TAF4, TAF5, TAF6, TAF7, TAF8, TAF9, TAF10, TAF11, TAF12 and TAF13. Interacts with TBP, TAF1, TAF6, TAF10, TAF11 and TAF13. Component also of a small TAF complex (SMAT) containing TAF8, TAF10 and SUPT7L. Forms a heterodimer with TAF10. Interaction with TAF10 is mediated mainly via its histone fold domain while interaction with SUPT7L is via its C-terminal region.

Its subcellular location is the nucleus. The protein localises to the cytoplasm. Functionally, the TFIID basal transcription factor complex plays a major role in the initiation of RNA polymerase II (Pol II)-dependent transcription. TFIID recognizes and binds promoters with or without a TATA box via its subunit TBP, a TATA-box-binding protein, and promotes assembly of the pre-initiation complex (PIC). The TFIID complex consists of TBP and TBP-associated factors (TAFs), including TAF1, TAF2, TAF3, TAF4, TAF5, TAF6, TAF7, TAF8, TAF9, TAF10, TAF11, TAF12 and TAF13. The TFIID complex structure can be divided into 3 modules TFIID-A, TFIID-B, and TFIID-C. TAF8 is involved in forming the TFIID-B module, together with TAF5. Mediates both basal and activator-dependent transcription. Plays a role in the differentiation of preadipocyte fibroblasts to adipocytes, however, does not seem to play a role in differentiation of myoblasts. Required for the integration of TAF10 in the TAF complex. May be important for survival of cells of the inner cell mass which constitute the pluripotent cell population of the early embryo. This chain is Transcription initiation factor TFIID subunit 8 (TAF8), found in Homo sapiens (Human).